The sequence spans 550 residues: Chaperonin GroEL (550 aa).

ATP is bound by residues 30-33 (TLGP), Lys51, 87-91 (DGTTT), Gly414, and Asp494.

This sequence belongs to the chaperonin (HSP60) family. Forms a cylinder of 14 subunits composed of two heptameric rings stacked back-to-back. Interacts with the co-chaperonin GroES.

It localises to the cytoplasm. The catalysed reaction is ATP + H2O + a folded polypeptide = ADP + phosphate + an unfolded polypeptide.. Functionally, together with its co-chaperonin GroES, plays an essential role in assisting protein folding. The GroEL-GroES system forms a nano-cage that allows encapsulation of the non-native substrate proteins and provides a physical environment optimized to promote and accelerate protein folding. This Buchnera aphidicola subsp. Thelaxes suberi protein is Chaperonin GroEL.